The primary structure comprises 249 residues: Hydroxyacylglutathione hydrolase (249 aa).

Residues His-53, His-55, Asp-57, His-58, His-110, Asp-127, and His-165 each coordinate Zn(2+).

It belongs to the metallo-beta-lactamase superfamily. Glyoxalase II family. Monomer. The cofactor is Zn(2+).

The catalysed reaction is an S-(2-hydroxyacyl)glutathione + H2O = a 2-hydroxy carboxylate + glutathione + H(+). The protein operates within secondary metabolite metabolism; methylglyoxal degradation; (R)-lactate from methylglyoxal: step 2/2. Its function is as follows. Thiolesterase that catalyzes the hydrolysis of S-D-lactoyl-glutathione to form glutathione and D-lactic acid. The polypeptide is Hydroxyacylglutathione hydrolase (Hamiltonella defensa subsp. Acyrthosiphon pisum (strain 5AT)).